The sequence spans 673 residues: Elongation factor G 1 (673 aa).

In terms of domain architecture, tr-type G spans 3-277 (KELRNIGIIA…SIVDYLPSPL (275 aa)). GTP contacts are provided by residues 12 to 19 (AHIDAGKT), 76 to 80 (DTPGH), and 130 to 133 (NKMD).

It belongs to the TRAFAC class translation factor GTPase superfamily. Classic translation factor GTPase family. EF-G/EF-2 subfamily.

The protein resides in the cytoplasm. In terms of biological role, catalyzes the GTP-dependent ribosomal translocation step during translation elongation. During this step, the ribosome changes from the pre-translocational (PRE) to the post-translocational (POST) state as the newly formed A-site-bound peptidyl-tRNA and P-site-bound deacylated tRNA move to the P and E sites, respectively. Catalyzes the coordinated movement of the two tRNA molecules, the mRNA and conformational changes in the ribosome. In Syntrophomonas wolfei subsp. wolfei (strain DSM 2245B / Goettingen), this protein is Elongation factor G 1.